Reading from the N-terminus, the 280-residue chain is MDIKASDVKELRDKTGAGMMECKKALQHCNGDAKEAEKYLKEKGLAAVEKRADRVTSEGIIVIKSDHKKAVMLEMTCETDFVAKNADFIAVGEDIAKTAFDKDISEVTPELNDKLLDLATRVRENMNLTRLINVKAGADEYLSRYIHSDKKTGVIIVLKSDKPEIFEKTEVQEFAYDCCLHAAAFMPLYVKKEDVDAAYIKEQEEIFKGQVAELNKPDNVKEGIVKGKISKHLSEICFLEQAFVKDDKLSVSKKMAEVGKEAGGSLSLSKLVIFQLGLGM.

The tract at residues 79–82 is involved in Mg(2+) ion dislocation from EF-Tu; sequence TDFV.

This sequence belongs to the EF-Ts family.

It is found in the cytoplasm. Functionally, associates with the EF-Tu.GDP complex and induces the exchange of GDP to GTP. It remains bound to the aminoacyl-tRNA.EF-Tu.GTP complex up to the GTP hydrolysis stage on the ribosome. This is Elongation factor Ts from Treponema denticola (strain ATCC 35405 / DSM 14222 / CIP 103919 / JCM 8153 / KCTC 15104).